We begin with the raw amino-acid sequence, 989 residues long: Phosphoenolpyruvate carboxylase (989 aa).

Active-site residues include histidine 175 and lysine 630.

It belongs to the PEPCase type 1 family. Mg(2+) is required as a cofactor.

It catalyses the reaction oxaloacetate + phosphate = phosphoenolpyruvate + hydrogencarbonate. Its function is as follows. Forms oxaloacetate, a four-carbon dicarboxylic acid source for the tricarboxylic acid cycle. The sequence is that of Phosphoenolpyruvate carboxylase from Prochlorococcus marinus (strain MIT 9215).